A 182-amino-acid polypeptide reads, in one-letter code: MSQSDLESSMRKSVEATQRNFNTIRTGRANSSLLDRISVEYYGAETPLKSLATLSTPDSQTIQIQPFDISALALIEKAIAMSELGFTPNNDGKVIRINVPPLTEERRKEFCKLASKYAEEGKVALRNLRRDAIDKIKKQEKEGEFSEDQSRDAQDSVQKTLDKFIAEVEQHLATKEADILKV.

It belongs to the RRF family.

It is found in the cytoplasm. Responsible for the release of ribosomes from messenger RNA at the termination of protein biosynthesis. May increase the efficiency of translation by recycling ribosomes from one round of translation to another. The chain is Ribosome-recycling factor from Synechococcus sp. (strain WH7803).